The primary structure comprises 155 residues: Ribosomal RNA large subunit methyltransferase H (155 aa).

S-adenosyl-L-methionine-binding positions include Leu72, Gly103, and 122-127 (LSDLTL).

The protein belongs to the RNA methyltransferase RlmH family. Homodimer.

It localises to the cytoplasm. It catalyses the reaction pseudouridine(1915) in 23S rRNA + S-adenosyl-L-methionine = N(3)-methylpseudouridine(1915) in 23S rRNA + S-adenosyl-L-homocysteine + H(+). Functionally, specifically methylates the pseudouridine at position 1915 (m3Psi1915) in 23S rRNA. The sequence is that of Ribosomal RNA large subunit methyltransferase H from Acidovorax sp. (strain JS42).